A 339-amino-acid polypeptide reads, in one-letter code: Glyceraldehyde-3-phosphate dehydrogenase (339 aa).

NAD(+) contacts are provided by residues arginine 13–isoleucine 14, aspartate 35, and lysine 84. D-glyceraldehyde 3-phosphate contacts are provided by residues serine 156–threonine 158, threonine 187, threonine 216–glycine 217, and arginine 239. Cysteine 157 functions as the Nucleophile in the catalytic mechanism. Residue asparagine 321 coordinates NAD(+).

It belongs to the glyceraldehyde-3-phosphate dehydrogenase family. Homotetramer.

The protein resides in the cytoplasm. It carries out the reaction D-glyceraldehyde 3-phosphate + phosphate + NAD(+) = (2R)-3-phospho-glyceroyl phosphate + NADH + H(+). It participates in carbohydrate degradation; glycolysis; pyruvate from D-glyceraldehyde 3-phosphate: step 1/5. In Onchocerca volvulus, this protein is Glyceraldehyde-3-phosphate dehydrogenase.